The following is a 133-amino-acid chain: Profilin-1 (133 aa).

A disulfide bridge connects residues Cys95 and Cys117.

The protein belongs to the profilin family. As to quaternary structure, dimer and tetramer. Occurs in many kinds of cells as a complex with monomeric actin in a 1:1 ratio.

The protein resides in the cytoplasm. Its subcellular location is the cytoskeleton. Its function is as follows. Binds to actin and affects the structure of the cytoskeleton. At high concentrations, profilin prevents the polymerization of actin, whereas it enhances it at low concentrations. By binding to PIP2, it inhibits the formation of IP3 and DG. Possesses high binding affinity for poly(L-proline). The polypeptide is Profilin-1 (Artemisia vulgaris (Mugwort)).